Here is a 240-residue protein sequence, read N- to C-terminus: Keratinocyte-associated protein 3 (240 aa).

The next 4 membrane-spanning stretches (helical) occupy residues 21–41 (VGLALILVGHVNLLLGAVLHG), 63–83 (VISVGSGLLSVSLGLVALLAS), 95–115 (LLALALVNLLLSAACSLGLLL), and 163–183 (ALALWIPSVFMSAAEAALSGY).

This sequence belongs to the TMEM54 family.

The protein localises to the membrane. This is Keratinocyte-associated protein 3 (KRTCAP3) from Bos taurus (Bovine).